The primary structure comprises 510 residues: ATP synthase subunit alpha (510 aa).

169 to 176 (GDRQTGKT) contacts ATP.

It belongs to the ATPase alpha/beta chains family. F-type ATPases have 2 components, CF(1) - the catalytic core - and CF(0) - the membrane proton channel. CF(1) has five subunits: alpha(3), beta(3), gamma(1), delta(1), epsilon(1). CF(0) has three main subunits: a(1), b(2) and c(9-12). The alpha and beta chains form an alternating ring which encloses part of the gamma chain. CF(1) is attached to CF(0) by a central stalk formed by the gamma and epsilon chains, while a peripheral stalk is formed by the delta and b chains.

It localises to the cell membrane. It catalyses the reaction ATP + H2O + 4 H(+)(in) = ADP + phosphate + 5 H(+)(out). In terms of biological role, produces ATP from ADP in the presence of a proton gradient across the membrane. The alpha chain is a regulatory subunit. The polypeptide is ATP synthase subunit alpha (Buchnera aphidicola subsp. Schizaphis graminum (strain Sg)).